We begin with the raw amino-acid sequence, 688 residues long: Polyribonucleotide nucleotidyltransferase (688 aa).

Residues aspartate 484 and aspartate 490 each coordinate Mg(2+). Residues proline 550–isoleucine 609 enclose the KH domain. Positions aspartate 626–alanine 688 constitute an S1 motif domain.

This sequence belongs to the polyribonucleotide nucleotidyltransferase family. Mg(2+) is required as a cofactor.

It is found in the cytoplasm. The catalysed reaction is RNA(n+1) + phosphate = RNA(n) + a ribonucleoside 5'-diphosphate. Its function is as follows. Involved in mRNA degradation. Catalyzes the phosphorolysis of single-stranded polyribonucleotides processively in the 3'- to 5'-direction. This is Polyribonucleotide nucleotidyltransferase from Helicobacter pylori (strain HPAG1).